Reading from the N-terminus, the 653-residue chain is DNA ligase (653 aa).

Residues Asn32–Asp36 and Ser80–Leu81 contribute to the NAD(+) site. Lys104 serves as the catalytic N6-AMP-lysine intermediate. 3 residues coordinate NAD(+): Arg125, Glu159, and Lys297. 4 residues coordinate Zn(2+): Cys386, Cys389, Cys406, and Cys411. One can recognise a BRCT domain in the interval Gly571–Ala653.

It belongs to the NAD-dependent DNA ligase family. LigA subfamily. Mg(2+) is required as a cofactor. Mn(2+) serves as cofactor.

It catalyses the reaction NAD(+) + (deoxyribonucleotide)n-3'-hydroxyl + 5'-phospho-(deoxyribonucleotide)m = (deoxyribonucleotide)n+m + AMP + beta-nicotinamide D-nucleotide.. In terms of biological role, DNA ligase that catalyzes the formation of phosphodiester linkages between 5'-phosphoryl and 3'-hydroxyl groups in double-stranded DNA using NAD as a coenzyme and as the energy source for the reaction. It is essential for DNA replication and repair of damaged DNA. The polypeptide is DNA ligase (Lachnoclostridium phytofermentans (strain ATCC 700394 / DSM 18823 / ISDg) (Clostridium phytofermentans)).